We begin with the raw amino-acid sequence, 263 residues long: Endonuclease 8 (263 aa).

Residue Pro2 is the Schiff-base intermediate with DNA of the active site. Catalysis depends on Glu3, which acts as the Proton donor. Residue Lys53 is the Proton donor; for beta-elimination activity of the active site. DNA contacts are provided by Gln70, Arg125, and Asn169. An FPG-type zinc finger spans residues 229-263 (KVFHRDGEACERCGGIIEKTTLSSRPFYWCPHCQK). The active-site Proton donor; for delta-elimination activity is Arg253.

Belongs to the FPG family. Requires Zn(2+) as cofactor.

It catalyses the reaction 2'-deoxyribonucleotide-(2'-deoxyribose 5'-phosphate)-2'-deoxyribonucleotide-DNA = a 3'-end 2'-deoxyribonucleotide-(2,3-dehydro-2,3-deoxyribose 5'-phosphate)-DNA + a 5'-end 5'-phospho-2'-deoxyribonucleoside-DNA + H(+). Its function is as follows. Involved in base excision repair of DNA damaged by oxidation or by mutagenic agents. Acts as a DNA glycosylase that recognizes and removes damaged bases. Has a preference for oxidized pyrimidines, such as thymine glycol, 5,6-dihydrouracil and 5,6-dihydrothymine. Has AP (apurinic/apyrimidinic) lyase activity and introduces nicks in the DNA strand. Cleaves the DNA backbone by beta-delta elimination to generate a single-strand break at the site of the removed base with both 3'- and 5'-phosphates. The protein is Endonuclease 8 of Salmonella arizonae (strain ATCC BAA-731 / CDC346-86 / RSK2980).